A 322-amino-acid polypeptide reads, in one-letter code: Interferon regulatory factor 1 (322 aa).

The IRF tryptophan pentad repeat DNA-binding region spans Arg5 to Pro113. N6-acetyllysine is present on Lys78. The disordered stretch occupies residues Glu92–Tyr164. A compositionally biased stretch (polar residues) spans Gly141–Leu157. Glycyl lysine isopeptide (Lys-Gly) (interchain with G-Cter in SUMO) cross-links involve residues Lys276 and Lys296.

Belongs to the IRF family. Monomer. Homodimer. Interacts with EP300. Interacts with MYD88. Interacts with PIAS3. Interacts with SPOP. Phosphorylated by CK2 and this positively regulates its activity. Post-translationally, sumoylation represses the transcriptional activity and displays enhanced resistance to protein degradation. Sumoylated by UBE2I/UBC9 and SUMO1. Inactivates the tumor suppressor activity. Elevated levels in tumor cells. Major site is Lys-276. Sumoylation is enhanced by PIAS3. Desumoylated by SENP1 in tumor cells and appears to compete with ubiquitination on C-terminal sites. In terms of processing, ubiquitinated in a SPOP-depedent manner. Appears to compete with sumoylation on C-terminal sites.

Its subcellular location is the nucleus. It is found in the cytoplasm. Activated by MYD88. In terms of biological role, transcriptional regulator which displays a remarkable functional diversity in the regulation of cellular responses. Regulates transcription of IFN and IFN-inducible genes, host response to viral and bacterial infections, regulation of many genes expressed during hematopoiesis, inflammation, immune responses and cell proliferation and differentiation, regulation of the cell cycle and induction of growth arrest and programmed cell death following DNA damage. Stimulates both innate and acquired immune responses through the activation of specific target genes and can act as a transcriptional activator and repressor regulating target genes by binding to an interferon-stimulated response element (ISRE) in their promoters. Has an essentail role in IFNG-dependent immunity to mycobacteria. Binds to a consensus sequence in gene promoters. Its target genes for transcriptional activation activity include: genes involved in anti-viral response, such as IFN-alpha/beta, RIGI, TNFSF10/TRAIL, ZBP1, OAS1/2, PIAS1/GBP, EIF2AK2/PKR and RSAD2/viperin; antibacterial response, such as GBP2, GBP5 and NOS2/INOS; anti-proliferative response, such as p53/TP53, LOX and CDKN1A; apoptosis, such as BBC3/PUMA, CASP1, CASP7 and CASP8; immune response, such as IL7, IL12A/B and IL15, PTGS2/COX2 and CYBB; DNA damage responses and DNA repair, such as POLQ/POLH; MHC class I expression, such as TAP1, PSMB9/LMP2, PSME1/PA28A, PSME2/PA28B and B2M and MHC class II expression, such as CIITA; metabolic enzymes, such as ACOD1/IRG1. Represses genes involved in anti-proliferative response, such as BIRC5/survivin, CCNB1, CCNE1, CDK1, CDK2 and CDK4 and in immune response, such as FOXP3, IL4, ANXA2 and TLR4. Stimulates p53/TP53-dependent transcription through enhanced recruitment of EP300 leading to increased acetylation of p53/TP53. Plays an important role in immune response directly affecting NK maturation and activity, macrophage production of IL12, Th1 development and maturation of CD8+ T-cells. Also implicated in the differentiation and maturation of dendritic cells and in the suppression of regulatory T (Treg) cells development. Acts as a tumor suppressor and plays a role not only in antagonism of tumor cell growth but also in stimulating an immune response against tumor cells. This chain is Interferon regulatory factor 1 (IRF1), found in Sus scrofa (Pig).